The primary structure comprises 122 residues: MKYRIALAVSLFALSAGSYATTLCQEKEQNILKEISYAEKHQNQNRIDGLNKALSEVRANCSDSQLRADHQKKIAKQKDEVAERQQDLAEAKQKGDADKIAKRERKLAEAQEELKKLEARDY.

An N-terminal signal peptide occupies residues 1–20; the sequence is MKYRIALAVSLFALSAGSYA. The interval 65-100 is disordered; that stretch reads QLRADHQKKIAKQKDEVAERQQDLAEAKQKGDADKI. Residues 66–100 show a composition bias toward basic and acidic residues; it reads LRADHQKKIAKQKDEVAERQQDLAEAKQKGDADKI.

This Escherichia coli (strain K12) protein is Protein YqjC (yqjC).